A 198-amino-acid chain; its full sequence is Putative pseudouridine methyltransferase (198 aa).

2 residues coordinate S-adenosyl-L-methionine: M132 and C186.

This sequence belongs to the methyltransferase superfamily. TrmY family.

It is found in the cytoplasm. This Shewanella baltica (strain OS185) protein is Putative pseudouridine methyltransferase.